The following is a 500-amino-acid chain: MTIDLNVIQSDIISARRAPENSLFIDGKFVSPIEPAAKPIPLINPATEEIIGTCANASAKDVDSAVENAYNTFRSGIWAKWPGKQRGLVLRKIAKMMREKRELLAGIDTINCGKPTPYALFDIDSCADMFEYYAEVAETDNPTVKVPLPNNPGFCAFEKRFPRGVIGVITPWNFPLKMALWKLVPAIASGNCVVLKPSELAPWSCLEFALICKEAGLPDGVLNVIIGSGKESGAALSCHPKIAYLAFTGSLATGKKIMHAAAENIVPLTLELGGKSPLIICEDADLSLAIPSAAFAIFFNQGEACTAASRLIVHESVADEVLGGLVSEANKLIIGNGLDPQVTLGPVVSKTQFEKIVSYIQSAINEGCKCVVGGLPRSEQKGYFIPPTVFTNVQTHNKIWREEIFGPVLAVKTFHTNEEALELANDSEYGLGSGVFSTNPKTLEFFSNNIEAGMCSLNNYHVVTHELPWIGWKHSGLGVGLSKHGYNEYMRLKQITQYVG.

Gly-249–Gly-254 is an NAD(+) binding site. The active-site Proton acceptor is the Glu-271. Catalysis depends on Cys-305, which acts as the Nucleophile.

It belongs to the aldehyde dehydrogenase family.

The catalysed reaction is betaine aldehyde + NAD(+) + H2O = glycine betaine + NADH + 2 H(+). Its pathway is amine and polyamine biosynthesis; betaine biosynthesis via choline pathway; betaine from betaine aldehyde: step 1/1. This is Probable betaine aldehyde dehydrogenase (meu8) from Schizosaccharomyces pombe (strain 972 / ATCC 24843) (Fission yeast).